Reading from the N-terminus, the 540-residue chain is Phenylalanine--tRNA ligase beta subunit (540 aa).

A B5 domain is found at 268-342 (LRHTSVPFSL…MAYGYDRFTL (75 aa)). Mg(2+) is bound by residues aspartate 320, aspartate 326, glutamate 329, and aspartate 330.

It belongs to the phenylalanyl-tRNA synthetase beta subunit family. Type 2 subfamily. As to quaternary structure, tetramer of two alpha and two beta subunits. The cofactor is Mg(2+).

It is found in the cytoplasm. The enzyme catalyses tRNA(Phe) + L-phenylalanine + ATP = L-phenylalanyl-tRNA(Phe) + AMP + diphosphate + H(+). In Metallosphaera sedula (strain ATCC 51363 / DSM 5348 / JCM 9185 / NBRC 15509 / TH2), this protein is Phenylalanine--tRNA ligase beta subunit.